Here is a 115-residue protein sequence, read N- to C-terminus: Large ribosomal subunit protein bL20 (115 aa).

This sequence belongs to the bacterial ribosomal protein bL20 family.

Binds directly to 23S ribosomal RNA and is necessary for the in vitro assembly process of the 50S ribosomal subunit. It is not involved in the protein synthesizing functions of that subunit. This is Large ribosomal subunit protein bL20 from Synechococcus sp. (strain CC9605).